The sequence spans 121 residues: Large ribosomal subunit protein uL18 (121 aa).

Basic residues predominate over residues 1–22 (MIKKPDKKTLRQGKHKRVRRKV). A disordered region spans residues 1-23 (MIKKPDKKTLRQGKHKRVRRKVA).

Belongs to the universal ribosomal protein uL18 family. As to quaternary structure, part of the 50S ribosomal subunit; part of the 5S rRNA/L5/L18/L25 subcomplex. Contacts the 5S and 23S rRNAs.

In terms of biological role, this is one of the proteins that bind and probably mediate the attachment of the 5S RNA into the large ribosomal subunit, where it forms part of the central protuberance. The polypeptide is Large ribosomal subunit protein uL18 (Syntrophomonas wolfei subsp. wolfei (strain DSM 2245B / Goettingen)).